Consider the following 600-residue polypeptide: Na(+)/dicarboxylate cotransporter 3 (600 aa).

Topologically, residues methionine 1–arginine 16 are cytoplasmic. A helical membrane pass occupies residues leucine 17–lysine 37. At glutamate 38–glutamate 55 the chain is on the extracellular side. A helical membrane pass occupies residues alanine 56 to leucine 76. Residues proline 77 to cysteine 82 are Cytoplasmic-facing. Residues proline 83–isoleucine 103 form a helical membrane-spanning segment. The Extracellular portion of the chain corresponds to glutamate 104 to phenylalanine 137. The helical transmembrane segment at leucine 138–isoleucine 158 threads the bilayer. The Cytoplasmic portion of the chain corresponds to leucine 159–tryptophan 229. The helical transmembrane segment at lysine 230–glycine 250 threads the bilayer. Topologically, residues threonine 251–isoleucine 278 are extracellular. The chain crosses the membrane as a helical span at residues phenylalanine 279–tyrosine 299. The Cytoplasmic segment spans residues glycine 300–isoleucine 336. Residues lysine 337–arginine 357 traverse the membrane as a helical segment. Topologically, residues aspartate 358–glycine 372 are extracellular. The helical transmembrane segment at phenylalanine 373–glutamine 393 threads the bilayer. Over lysine 394 to threonine 422 the chain is Cytoplasmic. Residues valine 423 to glutamate 443 constitute an intramembrane region (helical). The Cytoplasmic portion of the chain corresponds to serine 444–proline 461. Residues proline 462–asparagine 482 traverse the membrane as a helical segment. Topologically, residues threonine 483 to leucine 505 are extracellular. Residues tyrosine 506–proline 526 traverse the membrane as a helical segment. The Cytoplasmic segment spans residues proline 527–glycine 546. Residues leucine 547–threonine 567 form a helical membrane-spanning segment. The Extracellular portion of the chain corresponds to isoleucine 568–phenylalanine 600. Asparagine 584 and asparagine 594 each carry an N-linked (GlcNAc...) asparagine glycan.

It belongs to the SLC13A/DASS transporter (TC 2.A.47) family. NADC subfamily. As to expression, highly expressed in kidney, and at much lower levels in brain.

The protein resides in the cell membrane. The catalysed reaction is succinate(out) + 3 Na(+)(out) = succinate(in) + 3 Na(+)(in). The enzyme catalyses 2-oxoglutarate(out) + 3 Na(+)(out) = 2-oxoglutarate(in) + 3 Na(+)(in). It carries out the reaction N-acetyl-L-aspartate(out) + 3 Na(+)(out) = N-acetyl-L-aspartate(in) + 3 Na(+)(in). It catalyses the reaction fumarate(out) + 3 Na(+)(out) = fumarate(in) + 3 Na(+)(in). The catalysed reaction is glutarate(out) + 3 Na(+)(out) = glutarate(in) + 3 Na(+)(in). The enzyme catalyses 2,2-dimethylsuccinate(out) + 3 Na(+)(out) = 2,2-dimethylsuccinate(in) + 3 Na(+)(in). It carries out the reaction 2,3-dimethylsuccinate(out) + 3 Na(+)(out) = 2,3-dimethylsuccinate(in) + 3 Na(+)(in). It catalyses the reaction malate(out) + 3 Na(+)(out) = malate(in) + 3 Na(+)(in). The catalysed reaction is itaconate(out) + 3 Na(+)(out) = itaconate(in) + 3 Na(+)(in). In terms of biological role, high-affinity sodium-dicarboxylate cotransporter that accepts a range of substrates with 4-6 carbon atoms, such as the citric acid cycle intermediates succinate and alpha-ketoglutarate (2-oxoglutarate), as well as other compounds including N-acetyl-L-aspartate. Transports the dicarboxylate into the cell with a probable stoichiometry of 3 Na(+) for 1 divalent dicarboxylate, rendering the process electrogenic. Can transport citrate in a Na(+)-dependent manner, recognizing the divalent form of citrate rather than the trivalent form which is normally found in blood. Imports itaconate in hepatocytes leading to activation of TFEB-dependent lysosomal biogenesis involved in antibacterial innate immune response. The sequence is that of Na(+)/dicarboxylate cotransporter 3 (Slc13a3) from Mus musculus (Mouse).